The following is a 250-amino-acid chain: Kallikrein-9 (250 aa).

Positions 1–15 are cleaved as a signal peptide; the sequence is MKLGLLCALLSLLAG. Positions 23-249 constitute a Peptidase S1 domain; the sequence is AIGAEECRPN…YLDWIQEIME (227 aa). 6 disulfide bridges follow: C29-C164, C48-C64, C136-C238, C143-C210, C175-C189, and C200-C225. Residues H63 and D111 each act as charge relay system in the active site. 2 N-linked (GlcNAc...) asparagine glycosylation sites follow: N131 and N166. Catalysis depends on S204, which acts as the Charge relay system. The N-linked (GlcNAc...) asparagine glycan is linked to N211.

Belongs to the peptidase S1 family. Kallikrein subfamily. Skin, thymus, trachea, cerebellum and spinal cord.

The protein localises to the secreted. This Homo sapiens (Human) protein is Kallikrein-9 (KLK9).